The following is a 384-amino-acid chain: Queuine tRNA-ribosyltransferase (384 aa).

Asp-92 acts as the Proton acceptor in catalysis. Substrate contacts are provided by residues 92–96 (DSGGF), Asp-146, Gln-190, and Gly-217. The RNA binding stretch occupies residues 248–254 (GVGRPED). Catalysis depends on Asp-267, which acts as the Nucleophile. Residues 272–276 (TRHAR) are RNA binding; important for wobble base 34 recognition. Positions 305, 307, 310, and 337 each coordinate Zn(2+).

This sequence belongs to the queuine tRNA-ribosyltransferase family. In terms of assembly, homodimer. Within each dimer, one monomer is responsible for RNA recognition and catalysis, while the other monomer binds to the replacement base PreQ1. Zn(2+) serves as cofactor.

It catalyses the reaction 7-aminomethyl-7-carbaguanine + guanosine(34) in tRNA = 7-aminomethyl-7-carbaguanosine(34) in tRNA + guanine. The protein operates within tRNA modification; tRNA-queuosine biosynthesis. Functionally, catalyzes the base-exchange of a guanine (G) residue with the queuine precursor 7-aminomethyl-7-deazaguanine (PreQ1) at position 34 (anticodon wobble position) in tRNAs with GU(N) anticodons (tRNA-Asp, -Asn, -His and -Tyr). Catalysis occurs through a double-displacement mechanism. The nucleophile active site attacks the C1' of nucleotide 34 to detach the guanine base from the RNA, forming a covalent enzyme-RNA intermediate. The proton acceptor active site deprotonates the incoming PreQ1, allowing a nucleophilic attack on the C1' of the ribose to form the product. After dissociation, two additional enzymatic reactions on the tRNA convert PreQ1 to queuine (Q), resulting in the hypermodified nucleoside queuosine (7-(((4,5-cis-dihydroxy-2-cyclopenten-1-yl)amino)methyl)-7-deazaguanosine). In Xylella fastidiosa (strain M12), this protein is Queuine tRNA-ribosyltransferase.